A 284-amino-acid polypeptide reads, in one-letter code: Averufin oxidase A (284 aa).

Positions 1–23 are cleaved as a signal peptide; sequence MPTYALLGATGATGSAILRCLLA. Residues Asn62, Asn86, and Asn190 are each glycosylated (N-linked (GlcNAc...) asparagine).

This sequence belongs to the avfA family.

It participates in mycotoxin biosynthesis. Functionally, averufin oxidase A; part of the fragmented gene cluster that mediates the biosynthesis of dothistromin (DOTH), a polyketide toxin very similar in structure to the aflatoxin precursor, versicolorin B. The first step of the pathway is the conversion of acetate to norsolorinic acid (NOR) and requires the fatty acid synthase subunits hexA and hexB, as well as the polyketide synthase pksA. PksA combines a hexanoyl starter unit and 7 malonyl-CoA extender units to synthesize the precursor NOR. The hexanoyl starter unit is provided to the acyl-carrier protein (ACP) domain by the fungal fatty acid synthase hexA/hexB. The second step is the conversion of NOR to averantin (AVN) and requires the norsolorinic acid ketoreductase nor1, which catalyzes the dehydration of norsolorinic acid to form (1'S)-averantin. The cytochrome P450 monooxygenase avnA then catalyzes the hydroxylation of AVN to 5'hydroxyaverantin (HAVN). The next step is performed by adhA that transforms HAVN to averufin (AVF). Averufin might then be converted to hydroxyversicolorone by cypX and avfA. Hydroxyversicolorone is further converted versiconal hemiacetal acetate (VHA) by moxY. VHA is then the substrate for the versiconal hemiacetal acetate esterase est1 to yield versiconal (VAL). Versicolorin B synthase vbsA then converts VAL to versicolorin B (VERB) by closing the bisfuran ring. Then, the activity of the versicolorin B desaturase verB leads to versicolorin A (VERA). DotB, a predicted chloroperoxidase, may perform epoxidation of the A-ring of VERA. Alternatively, a cytochrome P450, such as cypX or avnA could catalyze this step. It is also possible that another, uncharacterized, cytochrome P450 enzyme is responsible for this step. Opening of the epoxide could potentially be achieved by the epoxide hydrolase epoA. However, epoA seems not to be required for DOTH biosynthesis, but other epoxide hydrolases may have the ability to complement this hydrolysis. Alternatively, opening of the epoxide ring could be achieved non-enzymatically. The next step is the deoxygenation of ring A to yield the 5,8-dihydroxyanthraquinone which is most likely catalyzed by the NADPH dehydrogenase encoded by ver1. The last stages of DOTH biosynthesis are proposed to involve hydroxylation of the bisfuran. OrdB and norB might have oxidative roles here. An alternative possibility is that cytochrome P450 monoogenases such as avnA and cypX might perform these steps in addition to previously proposed steps. The sequence is that of Averufin oxidase A from Dothistroma septosporum (strain NZE10 / CBS 128990) (Red band needle blight fungus).